Here is a 231-residue protein sequence, read N- to C-terminus: Ferredoxin-type protein NapG (231 aa).

The segment at residues 1–41 (MSRSAKPQNGRRRFLRDVVRTAGGLAAVGVALGLQQQTARA) is a signal peptide (tat-type signal). 4Fe-4S ferredoxin-type domains are found at residues 50 to 81 (GAINENAFASACVRCGQCVQACPYDTLKLATL), 89 to 121 (TPYFVARDIPCEMCEDIPCAKVCPSGALDREIE), 130 to 166 (LAVLVDQENCLNFQGLRCDVCYRECPKIDEAITLELE), and 177 to 208 (FLPTVHSDACTGCGKCEKVCVLEQPAIKVLPL). 16 residues coordinate [4Fe-4S] cluster: C61, C64, C67, C71, C99, C102, C107, C111, C139, C147, C150, C154, C186, C189, C192, and C196.

The cofactor is [4Fe-4S] cluster. In terms of processing, exported by the Tat system. The position of the signal peptide cleavage has not been experimentally proven.

Its subcellular location is the periplasm. Its function is as follows. Required for electron transfer from ubiquinol, via NapC, to the periplasmic nitrate reductase NapAB complex. The chain is Ferredoxin-type protein NapG (napG) from Escherichia coli (strain K12).